The following is a 719-amino-acid chain: MWWWRRRFWRPKRRWRWRRRRRRPLARRRRRPARLARRPRVRRRRFQWGRPRRYRPRRRRRRRKRQKIKLKQWNPAVTKFCRIIGYYPLIICGEGTTVRNYNVHSQDYVQYESYGGGMTTTMFNLKVPYEQFQLHQNFWTRSNIDLDLVRYHSVKFTFFRHPKVDFIVKFNRNPPFTDSVLTGPMLHPGVLMNSKRKILIPSWETRPRGKKRIPVRIGPPRLFTDHWYFQRDFCGVPLLTVNATACNLRYPFGSPQTKNICIYFLVLASIYNDKVSIAKDEVTKNYDTLVDAIKKSPQGLTVFNTFKTQEHMQEPSSETCKETQKTNPPFKYENLSSLWGDKIYKESTFNSFKTNAENLWKARSKHTLLGSKELNFKTGMYSAIFLTNGRLSPDYPGIYIEVVYNPLLGQGEGNMIWLEWCPKKTKQYNERQCYNLIQHVPLWAAIHGYMDFCKKTFKDNNLDKNTRVVLICPYTRPQLYNPQKPDWGYVPYDYNFAQTKMPDGNGYIPEFYRFRWYPSGFHQQNWMNDLDQCGPFSHRGEEKMATLTSKYNFKFTWGGNPIFQQTVKDPCKQSTFDIPGAGGIPRPIQIVNPKYLDPGITFHRWDLRRGFFGPAAVKRMQAESTDALFPTTGPKRPRTEVPVAVAGDALPSRERKRQAWQDSTSEETESEAEAQEEKTLQEQLQQQLKEQRQLRCGIQYMFQQLTKTQLHLHVPPIPQ.

The tract at residues 647–678 (GDALPSRERKRQAWQDSTSEETESEAEAQEEK) is disordered. Acidic residues predominate over residues 664-674 (TSEETESEAEA).

It belongs to the anelloviridae capsid protein family.

It is found in the virion. Self assemble to form an icosahedral capsid. This is Capsid protein from Torque teno virus (isolate Human/Germany/KAV/2001) (TTV).